Consider the following 356-residue polypeptide: Cysteine protease XCP2 (356 aa).

The N-terminal stretch at M1–A26 is a signal peptide. The propeptide at S27–A137 is activation peptide. 3 disulfides stabilise this stretch: C159–C201, C193–C234, and C292–C343. The active site involves C162. N181 is a glycosylation site (N-linked (GlcNAc...) asparagine). Catalysis depends on residues H298 and N318.

The protein belongs to the peptidase C1 family. As to quaternary structure, interacts with PRN2. As to expression, mostly expressed in roots, stems and flowers. Confined to tracheary elements, and specifically to xylem.

Its subcellular location is the vacuole. It is found in the cell membrane. Functionally, cysteine protease involved in xylem tracheary element (TE) autolysis during xylogenesis in roots. Participates in micro autolysis within the intact central vacuole before mega autolysis is initiated by tonoplast implosion. Involved in susceptibility to the bacterial plant pathogen Ralstonia solanacearum. This Arabidopsis thaliana (Mouse-ear cress) protein is Cysteine protease XCP2.